The following is a 271-amino-acid chain: Glutamate racemase (271 aa).

Residues 10–11 and 42–43 contribute to the substrate site; these read DS and YG. The Proton donor/acceptor role is filled by Cys-73. Residue 74-75 coordinates substrate; it reads NT. The active-site Proton donor/acceptor is the Cys-183. A substrate-binding site is contributed by 184–185; that stretch reads TH.

It belongs to the aspartate/glutamate racemases family.

The enzyme catalyses L-glutamate = D-glutamate. Its pathway is cell wall biogenesis; peptidoglycan biosynthesis. Functionally, provides the (R)-glutamate required for cell wall biosynthesis. The chain is Glutamate racemase from Streptococcus thermophilus (strain ATCC BAA-250 / LMG 18311).